Consider the following 365-residue polypeptide: Protein RecA (365 aa).

Residue 77–84 coordinates ATP; it reads GPESSGKT.

This sequence belongs to the RecA family.

The protein localises to the cytoplasm. Its function is as follows. Can catalyze the hydrolysis of ATP in the presence of single-stranded DNA, the ATP-dependent uptake of single-stranded DNA by duplex DNA, and the ATP-dependent hybridization of homologous single-stranded DNAs. It interacts with LexA causing its activation and leading to its autocatalytic cleavage. This is Protein RecA from Mesorhizobium japonicum (strain LMG 29417 / CECT 9101 / MAFF 303099) (Mesorhizobium loti (strain MAFF 303099)).